Here is a 614-residue protein sequence, read N- to C-terminus: Leucine-rich repeat and immunoglobulin-like domain-containing nogo receptor-interacting protein 1 (614 aa).

Positions 1–35 (MLAGGVRSMPSPLLACWQPILLLVLGSVLSGSATG) are cleaved as a signal peptide. 2 disulfides stabilise this stretch: Cys-36/Cys-42 and Cys-40/Cys-51. The 30-residue stretch at 36–65 (CPPRCECSAQDRAVLCHRKRFVAVPEGIPT) folds into the LRRNT domain. Residues 36-555 (CPPRCECSAQ…FDIKTLIIAT (520 aa)) lie on the Extracellular side of the membrane. LRR repeat units lie at residues 66 to 87 (ETRL…EFAS), 90 to 111 (HLEE…AFNN), 114 to 135 (NLRT…VFTG), 138 to 159 (NLTK…MFQD), 162 to 183 (NLKS…AFSG), 186 to 207 (SLEQ…ALSH), 210 to 231 (GLIV…SFKR), 258 to 279 (NLTS…AVRH), 282 to 303 (YLRF…MLHE), 306 to 327 (RLQE…AFRG), and 330 to 351 (YLRV…VFHS). N-linked (GlcNAc...) asparagine glycosylation is present at Asn-138. N-linked (GlcNAc...) asparagine glycosylation is present at Asn-196. N-linked (GlcNAc...) asparagine glycans are attached at residues Asn-258, Asn-268, and Asn-287. An N-linked (GlcNAc...) asparagine glycan is attached at Asn-335. An LRRCT domain is found at 363–417 (NPLACDCRLLWVFRRRWRLNFNRQQPTCATPEFVQGKEFKDFPDVLLPNYFTCRR). Intrachain disulfides connect Cys-367-Cys-390, Cys-369-Cys-415, and Cys-440-Cys-491. Residues 405–507 (PDVLLPNYFT…GNDSMPAHLH (103 aa)) enclose the Ig-like C2-type domain. N-linked (GlcNAc...) asparagine glycans are attached at residues Asn-486 and Asn-536. A helical membrane pass occupies residues 556 to 576 (TMGFISFLGVVLFCLVLLFLW). Residues 577-614 (SRGKGNTKHNIEIEYVPRKSDAGISSADAPRKFNMKMI) lie on the Cytoplasmic side of the membrane. Ser-596 bears the Phosphoserine mark.

Homotetramer. Forms a ternary complex with RTN4R/NGFR and RTN4R/TNFRSF19. Interacts with NGRF, RTN4R and MYT1L. Post-translationally, N-glycosylated. Contains predominantly high-mannose glycans.

It is found in the cell membrane. Functionally, functional component of the Nogo receptor signaling complex (RTN4R/NGFR) in RhoA activation responsible for some inhibition of axonal regeneration by myelin-associated factors. Is also an important negative regulator of oligodentrocyte differentiation and axonal myelination. Acts in conjunction with RTN4 and RTN4R in regulating neuronal precursor cell motility during cortical development. The sequence is that of Leucine-rich repeat and immunoglobulin-like domain-containing nogo receptor-interacting protein 1 (LINGO1) from Macaca fascicularis (Crab-eating macaque).